Here is a 59-residue protein sequence, read N- to C-terminus: Large ribosomal subunit protein uL30 (59 aa).

This sequence belongs to the universal ribosomal protein uL30 family. Part of the 50S ribosomal subunit.

This is Large ribosomal subunit protein uL30 from Clostridium botulinum (strain 657 / Type Ba4).